A 511-amino-acid chain; its full sequence is UDP-N-acetylhexosamine pyrophosphorylase-like protein 1 (511 aa).

Basic and acidic residues predominate over residues 1–19 (MDRSESAESAESRRRRAEE). The disordered stretch occupies residues 1–22 (MDRSESAESAESRRRRAEESGQ). A Substrate binding motif is present at residues 117 to 120 (LAGG). UTP-binding positions include 117-120 (LAGG), K131, Q205, and G231. N232 lines the substrate pocket. A UTP-binding site is contributed by D262. Positions 312 to 313 (EY) match the Substrate binding motif. A UTP-binding site is contributed by K386. A substrate-binding site is contributed by K416.

Belongs to the UDPGP type 1 family.

The chain is UDP-N-acetylhexosamine pyrophosphorylase-like protein 1 (uap1l1) from Xenopus tropicalis (Western clawed frog).